The following is a 404-amino-acid chain: Homoserine O-succinyltransferase (404 aa).

The span at 1 to 25 (MTDIQADPAVTAADAAQADTSSPTA) shows a compositional bias: low complexity. Residues 1–30 (MTDIQADPAVTAADAAQADTSSPTAHQGKP) are disordered. One can recognise an AB hydrolase-1 domain in the interval 75 to 384 (NAVLICHALN…HGHDAFLLED (310 aa)). S179 (nucleophile) is an active-site residue. Residue R249 coordinates substrate. Residues D344 and H377 contribute to the active site. D378 contributes to the substrate binding site.

Belongs to the AB hydrolase superfamily. MetX family. Homodimer.

The protein localises to the cytoplasm. It catalyses the reaction L-homoserine + succinyl-CoA = O-succinyl-L-homoserine + CoA. It participates in amino-acid biosynthesis; L-methionine biosynthesis via de novo pathway; O-succinyl-L-homoserine from L-homoserine: step 1/1. Its function is as follows. Transfers a succinyl group from succinyl-CoA to L-homoserine, forming succinyl-L-homoserine. The chain is Homoserine O-succinyltransferase from Ralstonia pickettii (strain 12J).